A 172-amino-acid chain; its full sequence is NADH-ubiquinone oxidoreductase chain 6 (172 aa).

The next 5 membrane-spanning stretches (helical) occupy residues 1–21 (MTYF…AVAS), 25–45 (PYFA…VLVG), 53–73 (LVLF…AALA), 86–106 (VLGY…IFWG), and 140–160 (GGML…VLEL).

This sequence belongs to the complex I subunit 6 family.

It is found in the mitochondrion membrane. The catalysed reaction is a ubiquinone + NADH + 5 H(+)(in) = a ubiquinol + NAD(+) + 4 H(+)(out). In terms of biological role, core subunit of the mitochondrial membrane respiratory chain NADH dehydrogenase (Complex I) that is believed to belong to the minimal assembly required for catalysis. Complex I functions in the transfer of electrons from NADH to the respiratory chain. The immediate electron acceptor for the enzyme is believed to be ubiquinone. The polypeptide is NADH-ubiquinone oxidoreductase chain 6 (MT-ND6) (Cyprinus carpio (Common carp)).